We begin with the raw amino-acid sequence, 816 residues long: Probable transcriptional regulator SLK2 (816 aa).

2 disordered regions span residues 133 to 153 and 166 to 189; these read HDPS…SQTN and SFFQ…KQDD. Polar residues-rich tracts occupy residues 139-153 and 166-176; these read LGGS…SQTN and SFFQDPNNLTQ. The segment at 307 to 554 is dimerization; sequence PSESSIVYWR…DQKVGPIEAL (248 aa). Positions 316–330 match the Nuclear localization signal motif; sequence RKFVTEYFSPRAKKR. Polar residues-rich tracts occupy residues 644 to 662 and 672 to 711; these read IQQE…QGTS and PSIS…SGNQ. A disordered region spans residues 644-711; it reads IQQEPSRNRS…QPPSCSSGNQ (68 aa).

This sequence belongs to the adn1/SEU family. In terms of assembly, forms corepressor complexes with LUH; LUH is the transcription repressor subunit and SLK2 the specific DNA-binding adapters. Expressed in young flower meristems, ovules and the carpel margin meristem.

The protein resides in the nucleus. In terms of biological role, probable transcription regulator that functions in the development of the carpel margin meristem similarly to SEUSS (SEU). In association with SEU, supports organ development from meristematic regions by facilitating auxin response and thus organ initiation, and by sustaining meristematic potential through the maintenance of PHABULOSA expression. DNA-binding adapter subunit of the SEU-SLK2 transcriptional corepressor of abiotic stress (e.g. salt and osmotic stress) response genes. The sequence is that of Probable transcriptional regulator SLK2 (SLK2) from Arabidopsis thaliana (Mouse-ear cress).